The primary structure comprises 182 residues: MNCLVYALGSLFLLSGLLLPSSEGKKKVSGSQGAIPPPDKGQPNDSEQGQAQPGDRVRGKGKGQALAAEEVLESSQEALHVTERKYLKRDWCKTQPLKQTIHEDGCNSRTIINRFCYGQCNSFYIPRHIRREEGSFQSCSFCKPKKFTTMVVTLNCPELQPPTKKKRITRVKQCRCISIDLD.

Positions 1–24 (MNCLVYALGSLFLLSGLLLPSSEG) are cleaved as a signal peptide. The disordered stretch occupies residues 23 to 65 (EGKKKVSGSQGAIPPPDKGQPNDSEQGQAQPGDRVRGKGKGQA). N-linked (GlcNAc...) asparagine glycosylation is present at Asn-44. 4 disulfide bridges follow: Cys-92–Cys-142, Cys-106–Cys-156, Cys-116–Cys-174, and Cys-120–Cys-176. One can recognise a CTCK domain in the interval 92–182 (CKTQPLKQTI…QCRCISIDLD (91 aa)).

The protein belongs to the DAN family.

The protein localises to the secreted. Functionally, cytokine that has an axial patterning activity. Acts like BMP antagonist in embryonic explants. Blocks the BMP2 activity. The sequence is that of Gremlin-1 (grem1) from Xenopus laevis (African clawed frog).